The sequence spans 270 residues: MISKINFVKMHGLGNDFVIVNKRDLSSSYDLSQLAKNMAERHTGIGCDQFILYEEHNDFYEMIIYNIDGSSAKLCGNATRCLAKLIYLDTGKQDITVMVGNKKLLCNVNDENNISVNVGSVSFNEAWMPSRDKVWEFAERYMIDLKETICVDIGNPHVVIFSKLEPQDQKIVGERLQAKELFADGVNVNFAEVKDNKIYLSVWERGVGLTLACGSGACGSFAAGLKHGFIHSPSTIVFKHGNLTMKEENGNIIMQGAATLVARGEYYCEQ.

3 residues coordinate substrate: N15, Q49, and N66. The active-site Proton donor is the C75. Residues 76–77 (GN), N155, N187, and 204–205 (ER) each bind substrate. C213 (proton acceptor) is an active-site residue. 214–215 (GS) is a substrate binding site.

Belongs to the diaminopimelate epimerase family. In terms of assembly, homodimer.

It is found in the cytoplasm. The catalysed reaction is (2S,6S)-2,6-diaminopimelate = meso-2,6-diaminopimelate. The protein operates within amino-acid biosynthesis; L-lysine biosynthesis via DAP pathway; DL-2,6-diaminopimelate from LL-2,6-diaminopimelate: step 1/1. In terms of biological role, catalyzes the stereoinversion of LL-2,6-diaminopimelate (L,L-DAP) to meso-diaminopimelate (meso-DAP), a precursor of L-lysine and an essential component of the bacterial peptidoglycan. This Rickettsia rickettsii (strain Iowa) protein is Diaminopimelate epimerase.